The sequence spans 348 residues: Protein RecA (348 aa).

67–74 serves as a coordination point for ATP; the sequence is GPESSGKT.

It belongs to the RecA family.

The protein resides in the cytoplasm. Can catalyze the hydrolysis of ATP in the presence of single-stranded DNA, the ATP-dependent uptake of single-stranded DNA by duplex DNA, and the ATP-dependent hybridization of homologous single-stranded DNAs. It interacts with LexA causing its activation and leading to its autocatalytic cleavage. The sequence is that of Protein RecA from Salinispora tropica (strain ATCC BAA-916 / DSM 44818 / JCM 13857 / NBRC 105044 / CNB-440).